We begin with the raw amino-acid sequence, 240 residues long: Serine protease SplB (240 aa).

A signal peptide spans 1–36 (MNKNVVIKSLAALTILTSVTGIGTTLVEEVQQTAKA). Active-site charge relay system residues include H75, D113, and S193.

This sequence belongs to the peptidase S1B family.

It is found in the secreted. Functionally, serine protease that cleaves specifically after the sequence Trp-Glu-Leu-Gln. The protein is Serine protease SplB (splB) of Staphylococcus aureus (strain USA300).